Reading from the N-terminus, the 284-residue chain is Tropomyosin Tod p 1.0102 (284 aa).

Residues 15 to 273 adopt a coiled-coil conformation; the sequence is KEVATDKAEQ…KERYKSISDE (259 aa). Residues 103-136 form a disordered region; it reads EERLTSAQSKLEDASKAADESERGRKVLENRSQG.

It belongs to the tropomyosin family. As to quaternary structure, homodimer. In terms of processing, the N-terminus is blocked. In terms of tissue distribution, expressed in mantle muscle (at protein level).

In terms of biological role, tropomyosin, in association with the troponin complex, plays a central role in the calcium dependent regulation of muscle contraction. The chain is Tropomyosin Tod p 1.0102 from Todarodes pacificus (Japanese flying squid).